We begin with the raw amino-acid sequence, 447 residues long: Glutamine synthetase (447 aa).

The region spanning 20 to 105 (RDVKFIRTQF…ILGDVYLPDG (86 aa)) is the GS beta-grasp domain. The GS catalytic domain maps to 112 to 447 (PRYVLKTAIK…WELSRYLSML (336 aa)). Mg(2+)-binding residues include E135 and E137. An ATP-binding site is contributed by E187. Positions 192 and 199 each coordinate Mg(2+). L-glutamate is bound by residues 243–244 (NG) and G244. Residue H248 coordinates Mg(2+). S252 provides a ligand contact to ATP. The L-glutamate site is built by R301, E307, and R319. ATP is bound by residues R319 and R324. E336 is a Mg(2+) binding site. R338 provides a ligand contact to L-glutamate.

It belongs to the glutamine synthetase family. Homohexamer. Interacts and forms stable complexes with the regulatory protein GlnK1. Mg(2+) serves as cofactor.

It localises to the cytoplasm. It catalyses the reaction L-glutamate + NH4(+) + ATP = L-glutamine + ADP + phosphate + H(+). With respect to regulation, directly stimulated by the effector molecule 2-oxoglutarate. Inhibited by GlnK1. 2-oxoglutarate antagonizes the inhibitory effects of GlnK1, but does not prevent GlnK1/GlnA1 complex formation. Functionally, probably involved in nitrogen metabolism via ammonium assimilation. Catalyzes the ATP-dependent biosynthesis of glutamine from glutamate and ammonia. In Methanosarcina mazei (strain ATCC BAA-159 / DSM 3647 / Goe1 / Go1 / JCM 11833 / OCM 88) (Methanosarcina frisia), this protein is Glutamine synthetase.